A 432-amino-acid chain; its full sequence is Trigger factor (432 aa).

In terms of domain architecture, PPIase FKBP-type spans 161–246; the sequence is EDRVTIDFTG…LKKVEERELP (86 aa).

This sequence belongs to the FKBP-type PPIase family. Tig subfamily. In terms of assembly, homodimer and monomer. In vivo most of the ribosomes are in complex with monomeric TF. Uncomplexed TF, however, is in a monomer-dimer equilibrium with approximately two thirds of TF existing in a dimeric state.

The protein resides in the cytoplasm. The catalysed reaction is [protein]-peptidylproline (omega=180) = [protein]-peptidylproline (omega=0). Involved in protein export. Acts as a chaperone by maintaining the newly synthesized protein in an open conformation. Functions as a peptidyl-prolyl cis-trans isomerase. The sequence is that of Trigger factor from Shigella boydii serotype 4 (strain Sb227).